Reading from the N-terminus, the 405-residue chain is MASHKDVKKVVLAYSGGLDTSIILKWLQTELGAEVVTFTADLGQGEELEPARKKAEMLGIKEIYIEDVREEFVRDFVFPMFRANAVYEGVYLLGTSIARPLISKHLIDIARKTGADAIAHGATGKGNDQVRFELSAYALNPDIKIIAPWRDWSFKSRTDLLEFAEKHQIPVAKDKKGEAPFSVDANLLHSSSEGKVLEDPAREAPEYVHMRTISPEAAPDKATVIKVGFERGDAVSIDGVRMSPATLLAKLNEYGRDNGIGRLDLVENRFVGMKSRGVYETPGGTILLAAHRAIESITLDRGAAHLKDELMPRYAELIYYGFWFSPEREMLQAAIDRSQEHVEGEVTLKLYKGNVMVIGRESGKSLYSDKLVTFEDDQGAYDQKDAAGFIKLNALRLRTLAARNR.

ATP contacts are provided by residues 13-21 (AYSGGLDTS) and alanine 40. L-citrulline contacts are provided by tyrosine 91 and serine 96. Glycine 121 lines the ATP pocket. Residues threonine 123, asparagine 127, and aspartate 128 each contribute to the L-aspartate site. Asparagine 127 lines the L-citrulline pocket. L-citrulline is bound by residues arginine 131, serine 182, serine 191, glutamate 267, and tyrosine 279.

Belongs to the argininosuccinate synthase family. Type 1 subfamily. In terms of assembly, homotetramer.

Its subcellular location is the cytoplasm. It catalyses the reaction L-citrulline + L-aspartate + ATP = 2-(N(omega)-L-arginino)succinate + AMP + diphosphate + H(+). The protein operates within amino-acid biosynthesis; L-arginine biosynthesis; L-arginine from L-ornithine and carbamoyl phosphate: step 2/3. This chain is Argininosuccinate synthase, found in Rhizobium meliloti (strain 1021) (Ensifer meliloti).